The following is a 216-amino-acid chain: 2-phospho-L-lactate guanylyltransferase (216 aa).

The protein belongs to the CofC family. As to quaternary structure, homodimer.

It catalyses the reaction (2S)-2-phospholactate + GTP + H(+) = (2S)-lactyl-2-diphospho-5'-guanosine + diphosphate. Its pathway is cofactor biosynthesis; coenzyme F420 biosynthesis. In terms of biological role, guanylyltransferase that catalyzes the activation of (2S)-2-phospholactate (2-PL) as (2S)-lactyl-2-diphospho-5'-guanosine, via the condensation of 2-PL with GTP. It is involved in the biosynthesis of coenzyme F420, a hydride carrier cofactor. The sequence is that of 2-phospho-L-lactate guanylyltransferase from Methanocaldococcus infernus (strain DSM 11812 / JCM 15783 / ME).